The chain runs to 143 residues: Sirohydrochlorin cobaltochelatase (143 aa).

The active-site Proton acceptor is histidine 18. Position 18 (histidine 18) interacts with Co(2+). Histidine 18 is a Ni(2+) binding site. Substrate contacts are provided by residues arginine 53 and 78–83 (LAHGVH). Histidine 83 lines the Co(2+) pocket. Position 83 (histidine 83) interacts with Ni(2+).

It belongs to the CbiX family. CbiXS subfamily. In terms of assembly, homotetramer; dimer of dimers.

The enzyme catalyses Co-sirohydrochlorin + 2 H(+) = sirohydrochlorin + Co(2+). It catalyses the reaction Ni-sirohydrochlorin + 2 H(+) = sirohydrochlorin + Ni(2+). The protein operates within cofactor biosynthesis; adenosylcobalamin biosynthesis; cob(II)yrinate a,c-diamide from sirohydrochlorin (anaerobic route): step 1/10. Functionally, catalyzes the insertion of Co(2+) into sirohydrochlorin as part of the anaerobic pathway to cobalamin biosynthesis. Involved in the biosynthesis of the unique nickel-containing tetrapyrrole coenzyme F430, the prosthetic group of methyl-coenzyme M reductase (MCR), which plays a key role in methanogenesis and anaerobic methane oxidation (Potential). Catalyzes the insertion of Ni(2+) into sirohydrochlorin to yield Ni-sirohydrochlorin (Potential). The sequence is that of Sirohydrochlorin cobaltochelatase from Methanothermobacter thermautotrophicus (strain ATCC 29096 / DSM 1053 / JCM 10044 / NBRC 100330 / Delta H) (Methanobacterium thermoautotrophicum).